We begin with the raw amino-acid sequence, 147 residues long: Peptidyl-lysine N-acetyltransferase YjaB (147 aa).

The N-acetyltransferase domain occupies 3–144 (ISIRRSRHEE…KPYPLLNLAY (142 aa)).

The protein belongs to the acetyltransferase family.

The enzyme catalyses L-lysyl-[protein] + acetyl-CoA = N(6)-acetyl-L-lysyl-[protein] + CoA + H(+). In terms of biological role, N-epsilon-lysine acetyltransferase that catalyzes acetylation of a large number of proteins. Binds acetyl-CoA. In Escherichia coli (strain K12), this protein is Peptidyl-lysine N-acetyltransferase YjaB (yjaB).